Reading from the N-terminus, the 483-residue chain is Glutamyl-tRNA(Gln) amidotransferase subunit A (483 aa).

Residues lysine 75 and serine 150 each act as charge relay system in the active site. The Acyl-ester intermediate role is filled by serine 174.

Belongs to the amidase family. GatA subfamily. Heterotrimer of A, B and C subunits.

It catalyses the reaction L-glutamyl-tRNA(Gln) + L-glutamine + ATP + H2O = L-glutaminyl-tRNA(Gln) + L-glutamate + ADP + phosphate + H(+). Its function is as follows. Allows the formation of correctly charged Gln-tRNA(Gln) through the transamidation of misacylated Glu-tRNA(Gln) in organisms which lack glutaminyl-tRNA synthetase. The reaction takes place in the presence of glutamine and ATP through an activated gamma-phospho-Glu-tRNA(Gln). This is Glutamyl-tRNA(Gln) amidotransferase subunit A from Gloeothece citriformis (strain PCC 7424) (Cyanothece sp. (strain PCC 7424)).